The following is a 569-amino-acid chain: Paxillin-B (569 aa).

The LD motif 1 signature appears at 10–18; that stretch reads DLDLLLADL. Residues 62 to 78 show a composition bias toward polar residues; sequence QPQTVQTISTPAPKNHN. The tract at residues 62-103 is disordered; that stretch reads QPQTVQTISTPAPKNHNTTTTTASFSVSSQPAPQPPQQSQQI. Residues 79–102 are compositionally biased toward low complexity; sequence TTTTTASFSVSSQPAPQPPQQSQQ. Positions 106-112 match the LD motif 2 motif; it reads LDDLDEL. The disordered stretch occupies residues 129–311; sequence TTPEEHITHA…SPKVVHGDDL (183 aa). The segment covering 150 to 161 has biased composition (low complexity); sequence NTSSTNSASSLS. 2 stretches are compositionally biased toward polar residues: residues 162 to 188 and 196 to 206; these read RPNN…TTKK and TLETTSGNNVY. Residues 207–217 show a composition bias toward low complexity; that stretch reads SSQPSQSQPQP. Residues 232 to 239 carry the LD motif 3 motif; sequence LDELLKGL. A compositionally biased stretch (basic residues) spans 258 to 272; sequence HQHHHQHQHHHHHNP. Over residues 273 to 301 the composition is skewed to low complexity; that stretch reads NHNQTQTVTTQINIGRTNTPNNNNNNNTN. The LD motif 4 signature appears at 311–318; sequence LDNLLNNL. 4 LIM zinc-binding domains span residues 334–391, 393–452, 453–510, and 511–569; these read GTCG…QELF, ARCA…TFAV, RCGG…QQAG, and SVCS…KLFA.

Belongs to the paxillin family. As to expression, expressed in the upper and lower cup of the fruiting body.

The protein resides in the cytoplasm. It localises to the cell cortex. Its subcellular location is the cell projection. It is found in the filopodium. The protein localises to the cell junction. The protein resides in the focal adhesion. It localises to the cytoskeleton. Its function is as follows. Required for cell-substrate adhesion, cell sorting, slug migration, and cell differentiation. May function upstream of limB. This chain is Paxillin-B (paxB), found in Dictyostelium discoideum (Social amoeba).